We begin with the raw amino-acid sequence, 437 residues long: GTPase HflX (437 aa).

The interval 150 to 173 (DRQGGGSGGGKGGGGAARGEGEKQ) is disordered. Residues 152 to 167 (QGGGSGGGKGGGGAAR) show a composition bias toward gly residues. A Hflx-type G domain is found at 212 to 382 (ATAAIVGYTN…ACVEMLESRV (171 aa)). GTP is bound by residues 218-225 (GYTNAGKS), 243-247 (FATLD), 265-268 (DTVG), 331-334 (NKVD), and 360-362 (SVK). Residues serine 225 and threonine 245 each contribute to the Mg(2+) site.

Belongs to the TRAFAC class OBG-HflX-like GTPase superfamily. HflX GTPase family. In terms of assembly, monomer. Associates with the 50S ribosomal subunit. Requires Mg(2+) as cofactor.

It is found in the cytoplasm. GTPase that associates with the 50S ribosomal subunit and may have a role during protein synthesis or ribosome biogenesis. In Akkermansia muciniphila (strain ATCC BAA-835 / DSM 22959 / JCM 33894 / BCRC 81048 / CCUG 64013 / CIP 107961 / Muc), this protein is GTPase HflX.